The chain runs to 469 residues: Glutamate--tRNA ligase (469 aa).

A 'HIGH' region motif is present at residues 9–19 (PSPTGFLHVGG). A 'KMSKS' region motif is present at residues 236 to 240 (KLSKR). Residue K239 coordinates ATP.

This sequence belongs to the class-I aminoacyl-tRNA synthetase family. Glutamate--tRNA ligase type 1 subfamily. Monomer.

The protein localises to the cytoplasm. It catalyses the reaction tRNA(Glu) + L-glutamate + ATP = L-glutamyl-tRNA(Glu) + AMP + diphosphate. Its function is as follows. Catalyzes the attachment of glutamate to tRNA(Glu) in a two-step reaction: glutamate is first activated by ATP to form Glu-AMP and then transferred to the acceptor end of tRNA(Glu). The sequence is that of Glutamate--tRNA ligase from Shewanella frigidimarina (strain NCIMB 400).